Consider the following 349-residue polypeptide: Inhibitor of nuclear factor kappa-B kinase-interacting protein (349 aa).

Residues 1 to 11 (MSEVKSRKKSG) show a composition bias toward basic residues. The interval 1–39 (MSEVKSRKKSGTKGAPAEPGKRNEGGKSPEARGGGGRGW) is disordered. The segment covering 19 to 30 (PGKRNEGGKSPE) has biased composition (basic and acidic residues). The chain crosses the membrane as a helical span at residues 45–61 (GVSLLSLGTCLGLAWFV). Asn-145 carries N-linked (GlcNAc...) asparagine glycosylation. Coiled coils occupy residues 183 to 216 (GLVTDVTSLTDSVQELENKIEKVEKNTVKNIGDL) and 304 to 347 (IGRL…HISD). A glycan (N-linked (GlcNAc...) asparagine) is linked at Asn-327.

In terms of processing, N-glycosylated.

Its subcellular location is the endoplasmic reticulum membrane. Its function is as follows. Target of p53/TP53 with pro-apoptotic function. The chain is Inhibitor of nuclear factor kappa-B kinase-interacting protein (IKBIP) from Bos taurus (Bovine).